Reading from the N-terminus, the 259-residue chain is tRNA (guanine-N(7)-)-methyltransferase (259 aa).

The disordered stretch occupies residues 1-74 (MGHHGQMHAQ…PAEDPDRPGP (74 aa)). Residues Glu91, Glu116, Asn143, and Asp166 each contribute to the S-adenosyl-L-methionine site. The active site involves Asp166. Substrate is bound by residues Lys170, Asp202, and 238-241 (TKYE).

Belongs to the class I-like SAM-binding methyltransferase superfamily. TrmB family.

It catalyses the reaction guanosine(46) in tRNA + S-adenosyl-L-methionine = N(7)-methylguanosine(46) in tRNA + S-adenosyl-L-homocysteine. It functions in the pathway tRNA modification; N(7)-methylguanine-tRNA biosynthesis. Catalyzes the formation of N(7)-methylguanine at position 46 (m7G46) in tRNA. The protein is tRNA (guanine-N(7)-)-methyltransferase of Mycobacterium avium (strain 104).